We begin with the raw amino-acid sequence, 420 residues long: Phytoene synthase 1, chloroplastic (420 aa).

A chloroplast-targeting transit peptide spans 1–70 (MAAITLLRSA…GEIARTSPVY (70 aa)).

Belongs to the phytoene/squalene synthase family. As to expression, expressed in leaves. Highly expressed in developing leaves. Expressed at low levels in roots.

Its subcellular location is the plastid. It is found in the chloroplast membrane. The protein resides in the chloroplast. It localises to the plastoglobule. The enzyme catalyses 2 (2E,6E,10E)-geranylgeranyl diphosphate = 15-cis-phytoene + 2 diphosphate. Its function is as follows. Catalyzes the conversion of geranylgeranyl diphosphate to phytoene. Mediates the first committed step in carotenoid biosynthesis. This chain is Phytoene synthase 1, chloroplastic, found in Oryza sativa subsp. japonica (Rice).